The following is a 92-amino-acid chain: Small ribosomal subunit protein bS20 (92 aa).

Residues 1–23 form a disordered region; the sequence is MANSPSAKKRAIQAEKRRSHNAS.

This sequence belongs to the bacterial ribosomal protein bS20 family.

Its function is as follows. Binds directly to 16S ribosomal RNA. The chain is Small ribosomal subunit protein bS20 from Stutzerimonas stutzeri (strain A1501) (Pseudomonas stutzeri).